A 250-amino-acid chain; its full sequence is S-adenosyl-L-methionine-dependent 2-deoxy-scyllo-inosamine dehydrogenase (250 aa).

Residues C16, C20, C23, C169, C187, and E223 each coordinate [4Fe-4S] cluster.

It belongs to the radical SAM superfamily. Requires [4Fe-4S] cluster as cofactor.

It catalyses the reaction 2-deoxy-scyllo-inosamine + S-adenosyl-L-methionine = 3-amino-2,3-dideoxy-scyllo-inosose + 5'-deoxyadenosine + L-methionine + H(+). Its pathway is antibiotic biosynthesis; butirosin biosynthesis. Its function is as follows. Catalyzes the radical S-adenosyl-L-methionine (SAM)-dependent two-electron oxidation of 2-deoxy-scyllo-inosamine (DOIA) to amino-dideoxy-scyllo-inosose (amino-DOI) in the biosynthetic pathway of butirosin. The polypeptide is S-adenosyl-L-methionine-dependent 2-deoxy-scyllo-inosamine dehydrogenase (btrN) (Niallia circulans (Bacillus circulans)).